A 207-amino-acid chain; its full sequence is MLASAGGYWPMSAQGVNKMRRRVLVAATSVVGAVGAGYALVPFVASMNPSARARAAGAPVEADISKLEPGALLRVKWRGKPVWVVHRSPEMLAALSSNDPKLVDPTSEVPQQPDYCKNPTRSIKPEYLVAIGICTHLGCSPTYRPEFGPDDLGSDWKGGFHCPCHGSRFDLAARVFKNVPAPTNLVIPKHVYLNDTTILIGEDRGSA.

A helical transmembrane segment spans residues 24–44 (LVAATSVVGAVGAGYALVPFV). One can recognise a Rieske domain in the interval 100–199 (PKLVDPTSEV…HVYLNDTTIL (100 aa)). [2Fe-2S] cluster-binding residues include C134, H136, C162, and H165. A disulfide bridge links C139 with C164.

In terms of assembly, the main subunits of complex b-c1 are: cytochrome b, cytochrome c1 and the Rieske protein. [2Fe-2S] cluster serves as cofactor.

Its subcellular location is the cell membrane. The enzyme catalyses a quinol + 2 Fe(III)-[cytochrome c](out) = a quinone + 2 Fe(II)-[cytochrome c](out) + 2 H(+)(out). In terms of biological role, component of the ubiquinol-cytochrome c reductase complex (complex III or cytochrome b-c1 complex), which is a respiratory chain that generates an electrochemical potential coupled to ATP synthesis. In Allochromatium vinosum (strain ATCC 17899 / DSM 180 / NBRC 103801 / NCIMB 10441 / D) (Chromatium vinosum), this protein is Ubiquinol-cytochrome c reductase iron-sulfur subunit (petA).